Here is a 233-residue protein sequence, read N- to C-terminus: Antilisterial bacteriocin subtilosin biosynthesis protein AlbG (233 aa).

Transmembrane regions (helical) follow at residues serine 4–valine 24, glycine 46–valine 66, threonine 116–valine 136, threonine 145–methionine 165, and isoleucine 192–isoleucine 212.

Its subcellular location is the cell membrane. Its function is as follows. Involved in the production of the bacteriocin subtilosin. This is Antilisterial bacteriocin subtilosin biosynthesis protein AlbG (albG) from Bacillus subtilis.